Consider the following 284-residue polypeptide: 4-hydroxybenzoate octaprenyltransferase (284 aa).

Transmembrane regions (helical) follow at residues 18–38 (PIGT…AAEG), 42–62 (WHVL…GCVI), 93–113 (IILF…MNPL), 136–156 (HLPQ…AWAA), 161–181 (LPWV…AYDT), 209–229 (LIIG…GLHY), 233–253 (QSFY…QHLI), and 264–284 (AFLN…VAFW).

The protein belongs to the UbiA prenyltransferase family. Requires Mg(2+) as cofactor.

Its subcellular location is the cell inner membrane. The enzyme catalyses all-trans-octaprenyl diphosphate + 4-hydroxybenzoate = 4-hydroxy-3-(all-trans-octaprenyl)benzoate + diphosphate. The protein operates within cofactor biosynthesis; ubiquinone biosynthesis. In terms of biological role, catalyzes the prenylation of para-hydroxybenzoate (PHB) with an all-trans polyprenyl group. Mediates the second step in the final reaction sequence of ubiquinone-8 (UQ-8) biosynthesis, which is the condensation of the polyisoprenoid side chain with PHB, generating the first membrane-bound Q intermediate 3-octaprenyl-4-hydroxybenzoate. This chain is 4-hydroxybenzoate octaprenyltransferase, found in Vibrio vulnificus (strain CMCP6).